The sequence spans 417 residues: CinA-like protein (417 aa).

This sequence belongs to the CinA family.

This Leptospira biflexa serovar Patoc (strain Patoc 1 / Ames) protein is CinA-like protein.